The chain runs to 120 residues: Large ribosomal subunit protein uL24 (120 aa).

It belongs to the universal ribosomal protein uL24 family. As to quaternary structure, part of the 50S ribosomal subunit.

Its function is as follows. One of two assembly initiator proteins, it binds directly to the 5'-end of the 23S rRNA, where it nucleates assembly of the 50S subunit. In terms of biological role, located at the polypeptide exit tunnel on the outside of the subunit. This is Large ribosomal subunit protein uL24 from Methanocaldococcus jannaschii (strain ATCC 43067 / DSM 2661 / JAL-1 / JCM 10045 / NBRC 100440) (Methanococcus jannaschii).